The primary structure comprises 251 residues: 2,3-bisphosphoglycerate-dependent phosphoglycerate mutase (251 aa).

Residues 13–20 (RHGESEWN), 26–27 (TG), R65, 92–95 (ERHY), K103, 119–120 (RR), and 186–187 (GN) contribute to the substrate site. H14 serves as the catalytic Tele-phosphohistidine intermediate. The Proton donor/acceptor role is filled by E92.

The protein belongs to the phosphoglycerate mutase family. BPG-dependent PGAM subfamily.

It catalyses the reaction (2R)-2-phosphoglycerate = (2R)-3-phosphoglycerate. It functions in the pathway carbohydrate degradation; glycolysis; pyruvate from D-glyceraldehyde 3-phosphate: step 3/5. Its function is as follows. Catalyzes the interconversion of 2-phosphoglycerate and 3-phosphoglycerate. The protein is 2,3-bisphosphoglycerate-dependent phosphoglycerate mutase of Rhodococcus opacus (strain B4).